A 292-amino-acid polypeptide reads, in one-letter code: Ribosomal protein L11 methyltransferase (292 aa).

S-adenosyl-L-methionine-binding residues include Thr-144, Gly-165, Asp-187, and Asn-229.

This sequence belongs to the methyltransferase superfamily. PrmA family.

Its subcellular location is the cytoplasm. The catalysed reaction is L-lysyl-[protein] + 3 S-adenosyl-L-methionine = N(6),N(6),N(6)-trimethyl-L-lysyl-[protein] + 3 S-adenosyl-L-homocysteine + 3 H(+). In terms of biological role, methylates ribosomal protein L11. This chain is Ribosomal protein L11 methyltransferase, found in Pseudomonas syringae pv. tomato (strain ATCC BAA-871 / DC3000).